A 267-amino-acid chain; its full sequence is Small ribosomal subunit protein eS4 (267 aa).

The S4 RNA-binding domain occupies 42 to 104 (LPLILVLRNR…TKENFRLLFD (63 aa)).

Belongs to the eukaryotic ribosomal protein eS4 family.

It is found in the cytoplasm. The protein is Small ribosomal subunit protein eS4 (rps4) of Dictyostelium discoideum (Social amoeba).